A 108-amino-acid chain; its full sequence is Nucleoid-associated protein Mpe_A2533 (108 aa).

Positions 86 to 108 (TSEEKMGKLTAGMPLPPGMKLPF) are disordered. Residues 99–108 (PLPPGMKLPF) are compositionally biased toward pro residues.

The protein belongs to the YbaB/EbfC family. Homodimer.

It is found in the cytoplasm. The protein resides in the nucleoid. Functionally, binds to DNA and alters its conformation. May be involved in regulation of gene expression, nucleoid organization and DNA protection. The sequence is that of Nucleoid-associated protein Mpe_A2533 from Methylibium petroleiphilum (strain ATCC BAA-1232 / LMG 22953 / PM1).